The following is a 181-amino-acid chain: ATP synthase subunit b, chloroplastic (181 aa).

A helical membrane pass occupies residues 28–50 (IINLSVVLGVLIYFGKGVLSNLL).

The protein belongs to the ATPase B chain family. As to quaternary structure, F-type ATPases have 2 components, F(1) - the catalytic core - and F(0) - the membrane proton channel. F(1) has five subunits: alpha(3), beta(3), gamma(1), delta(1), epsilon(1). F(0) has four main subunits: a(1), b(1), b'(1) and c(10-14). The alpha and beta chains form an alternating ring which encloses part of the gamma chain. F(1) is attached to F(0) by a central stalk formed by the gamma and epsilon chains, while a peripheral stalk is formed by the delta, b and b' chains.

The protein localises to the plastid. Its subcellular location is the chloroplast thylakoid membrane. Its function is as follows. F(1)F(0) ATP synthase produces ATP from ADP in the presence of a proton or sodium gradient. F-type ATPases consist of two structural domains, F(1) containing the extramembraneous catalytic core and F(0) containing the membrane proton channel, linked together by a central stalk and a peripheral stalk. During catalysis, ATP synthesis in the catalytic domain of F(1) is coupled via a rotary mechanism of the central stalk subunits to proton translocation. In terms of biological role, component of the F(0) channel, it forms part of the peripheral stalk, linking F(1) to F(0). In Cryptomeria japonica (Japanese cedar), this protein is ATP synthase subunit b, chloroplastic.